Reading from the N-terminus, the 394-residue chain is Putative agmatinase 1 (394 aa).

The first 20 residues, 1–20 (MALQSLFLILLAGAAQLAQA), serve as a signal peptide directing secretion. Residues histidine 186, aspartate 209, histidine 211, aspartate 213, aspartate 307, and aspartate 309 each contribute to the Mn(2+) site.

Belongs to the arginase family. Mn(2+) serves as cofactor.

The catalysed reaction is agmatine + H2O = urea + putrescine. This Schizosaccharomyces pombe (strain 972 / ATCC 24843) (Fission yeast) protein is Putative agmatinase 1.